A 271-amino-acid chain; its full sequence is Formamidopyrimidine-DNA glycosylase (271 aa).

Residue P2 is the Schiff-base intermediate with DNA of the active site. E3 serves as the catalytic Proton donor. K58 acts as the Proton donor; for beta-elimination activity in catalysis. DNA is bound by residues H91, R110, and R152. The FPG-type zinc-finger motif lies at 237–271 (WVYGRAGQSCRQCGELVSKTRQGQRSTFFCARCQH). R261 (proton donor; for delta-elimination activity) is an active-site residue.

Belongs to the FPG family. In terms of assembly, monomer. Requires Zn(2+) as cofactor.

It catalyses the reaction Hydrolysis of DNA containing ring-opened 7-methylguanine residues, releasing 2,6-diamino-4-hydroxy-5-(N-methyl)formamidopyrimidine.. The enzyme catalyses 2'-deoxyribonucleotide-(2'-deoxyribose 5'-phosphate)-2'-deoxyribonucleotide-DNA = a 3'-end 2'-deoxyribonucleotide-(2,3-dehydro-2,3-deoxyribose 5'-phosphate)-DNA + a 5'-end 5'-phospho-2'-deoxyribonucleoside-DNA + H(+). Involved in base excision repair of DNA damaged by oxidation or by mutagenic agents. Acts as a DNA glycosylase that recognizes and removes damaged bases. Has a preference for oxidized purines, such as 7,8-dihydro-8-oxoguanine (8-oxoG). Has AP (apurinic/apyrimidinic) lyase activity and introduces nicks in the DNA strand. Cleaves the DNA backbone by beta-delta elimination to generate a single-strand break at the site of the removed base with both 3'- and 5'-phosphates. The sequence is that of Formamidopyrimidine-DNA glycosylase from Nitrosomonas europaea (strain ATCC 19718 / CIP 103999 / KCTC 2705 / NBRC 14298).